A 340-amino-acid polypeptide reads, in one-letter code: Uroporphyrinogen decarboxylase (340 aa).

Residues R21–R25, F40, D71, Y146, S201, and H316 each bind substrate.

The protein belongs to the uroporphyrinogen decarboxylase family. As to quaternary structure, homodimer.

The protein localises to the cytoplasm. The catalysed reaction is uroporphyrinogen III + 4 H(+) = coproporphyrinogen III + 4 CO2. Its pathway is porphyrin-containing compound metabolism; protoporphyrin-IX biosynthesis; coproporphyrinogen-III from 5-aminolevulinate: step 4/4. Catalyzes the decarboxylation of four acetate groups of uroporphyrinogen-III to yield coproporphyrinogen-III. This chain is Uroporphyrinogen decarboxylase, found in Rickettsia bellii (strain RML369-C).